We begin with the raw amino-acid sequence, 246 residues long: 3-deoxy-manno-octulosonate cytidylyltransferase (246 aa).

It belongs to the KdsB family.

It is found in the cytoplasm. It carries out the reaction 3-deoxy-alpha-D-manno-oct-2-ulosonate + CTP = CMP-3-deoxy-beta-D-manno-octulosonate + diphosphate. The protein operates within nucleotide-sugar biosynthesis; CMP-3-deoxy-D-manno-octulosonate biosynthesis; CMP-3-deoxy-D-manno-octulosonate from 3-deoxy-D-manno-octulosonate and CTP: step 1/1. It participates in bacterial outer membrane biogenesis; lipopolysaccharide biosynthesis. Functionally, activates KDO (a required 8-carbon sugar) for incorporation into bacterial lipopolysaccharide in Gram-negative bacteria. This is 3-deoxy-manno-octulosonate cytidylyltransferase from Bradyrhizobium diazoefficiens (strain JCM 10833 / BCRC 13528 / IAM 13628 / NBRC 14792 / USDA 110).